The primary structure comprises 145 residues: Hemoglobin fetal subunit beta (145 aa).

The 145-residue stretch at 1–145 (MLSAEEKAAV…VANALAHRYH (145 aa)) folds into the Globin domain. His62 and His91 together coordinate heme b.

The protein belongs to the globin family. Heterotetramer of two alpha chains and two beta chains. As to expression, red blood cells.

Functionally, involved in oxygen transport from the lung to the various peripheral tissues. The protein is Hemoglobin fetal subunit beta of Bos taurus (Bovine).